Here is a 716-residue protein sequence, read N- to C-terminus: DNA ligase (716 aa).

Residues 42–46 (DAEYD), 91–92 (SL), and E125 contribute to the NAD(+) site. Catalysis depends on K127, which acts as the N6-AMP-lysine intermediate. Positions 148, 184, 300, and 324 each coordinate NAD(+). Zn(2+) contacts are provided by C429, C432, C447, and C453. The region spanning 638–716 (TASSPIAGKI…EEAWLQLIEG (79 aa)) is the BRCT domain.

This sequence belongs to the NAD-dependent DNA ligase family. LigA subfamily. It depends on Mg(2+) as a cofactor. The cofactor is Mn(2+).

It catalyses the reaction NAD(+) + (deoxyribonucleotide)n-3'-hydroxyl + 5'-phospho-(deoxyribonucleotide)m = (deoxyribonucleotide)n+m + AMP + beta-nicotinamide D-nucleotide.. Functionally, DNA ligase that catalyzes the formation of phosphodiester linkages between 5'-phosphoryl and 3'-hydroxyl groups in double-stranded DNA using NAD as a coenzyme and as the energy source for the reaction. It is essential for DNA replication and repair of damaged DNA. In Bartonella henselae (strain ATCC 49882 / DSM 28221 / CCUG 30454 / Houston 1) (Rochalimaea henselae), this protein is DNA ligase.